The chain runs to 340 residues: MPKTSDTEYLSFPILLGDIGGTNARFSILIDSFAEPVHLTTVKTAEYPGIDDAIQQAVLDKTSLQPVSTILAIAGPIEGDEIPLTNCHWVVKPKDMLAKLGLKDVIVINDFEAQALAIAALDDDNREPIGSGKKDMLASRVVLGPGTGLGVAGLVYARHMWFPVPGEGGHIDIGPRSARDYVVFPHIETIEGRVAGEQILCGRGLVNLYRAICKADGIEPVFSDPADITSQGLSGQNAQAKETLSLFSTYLGRVAGDLALIFMAKGGVYLAGGISQKIIPALKSPEFRAAFEDKAPHSALMRTIPTFVVTHPQAALSGLATYARTPADFGLALDGRRWRA.

17 to 22 is an ATP binding site; sequence GDIGGT.

Belongs to the bacterial glucokinase family.

The protein localises to the cytoplasm. The enzyme catalyses D-glucose + ATP = D-glucose 6-phosphate + ADP + H(+). The sequence is that of Glucokinase from Agrobacterium fabrum (strain C58 / ATCC 33970) (Agrobacterium tumefaciens (strain C58)).